We begin with the raw amino-acid sequence, 253 residues long: Peptidase inhibitor R3HDML (253 aa).

The N-terminal stretch at 1–24 (MPLLPSTVGLAGLLFWAGQAVNAL) is a signal peptide. The propeptide occupies 25–56 (IMPNATPAPAQPESTAMRLLSGLEVPRYRRKR). The SCP domain maps to 67-207 (LDYHNHIRAS…HRAAYLVCNY (141 aa)). Asn-120 is a glycosylation site (N-linked (GlcNAc...) asparagine).

The protein belongs to the CRISP family.

It is found in the secreted. Putative serine protease inhibitor. The polypeptide is Peptidase inhibitor R3HDML (R3HDML) (Homo sapiens (Human)).